The primary structure comprises 671 residues: DNA ligase (671 aa).

NAD(+)-binding positions include 32–36 (DAEYD), 81–82 (SL), and glutamate 113. Catalysis depends on lysine 115, which acts as the N6-AMP-lysine intermediate. Positions 136, 173, 290, and 314 each coordinate NAD(+). Zn(2+) contacts are provided by cysteine 408, cysteine 411, cysteine 426, and cysteine 432. The BRCT domain maps to 593–671 (EIDSPFAGKT…EAEMIRLLGA (79 aa)).

The protein belongs to the NAD-dependent DNA ligase family. LigA subfamily. Mg(2+) serves as cofactor. Requires Mn(2+) as cofactor.

It catalyses the reaction NAD(+) + (deoxyribonucleotide)n-3'-hydroxyl + 5'-phospho-(deoxyribonucleotide)m = (deoxyribonucleotide)n+m + AMP + beta-nicotinamide D-nucleotide.. Functionally, DNA ligase that catalyzes the formation of phosphodiester linkages between 5'-phosphoryl and 3'-hydroxyl groups in double-stranded DNA using NAD as a coenzyme and as the energy source for the reaction. It is essential for DNA replication and repair of damaged DNA. This chain is DNA ligase, found in Salmonella typhi.